Here is a 302-residue protein sequence, read N- to C-terminus: Recombination-associated protein RdgC (302 aa).

This sequence belongs to the RdgC family.

The protein resides in the cytoplasm. Its subcellular location is the nucleoid. Its function is as follows. May be involved in recombination. This is Recombination-associated protein RdgC from Xylella fastidiosa (strain M12).